A 186-amino-acid chain; its full sequence is Protein C (186 aa).

Polar residues predominate over residues Met-1–Ser-15. Positions Met-1 to Gly-44 are disordered.

It belongs to the morbillivirus protein C family. Interacts with the phosphoprotein (via C-terminus); this interaction allows C to associate with the ribonucleocapsid.

Its subcellular location is the host nucleus. The protein resides in the host cytoplasmic vesicle. Functionally, ribonucleocapsid-associated protein that interacts with the phosphoprotein (P), thereby increasing replication accuracy and processivity of the polymerase complex. This Homo sapiens (Human) protein is Protein C (P/V/C).